We begin with the raw amino-acid sequence, 151 residues long: Group 10 secretory phospholipase A2 (151 aa).

The signal sequence occupies residues 1-17; the sequence is MLLLLLLLLLGPGSCLS. Positions 18–28 are excised as a propeptide; that stretch reads EATRRSHVYKR. Intrachain disulfides connect cysteine 39–cysteine 97, cysteine 53–cysteine 143, cysteine 55–cysteine 71, cysteine 70–cysteine 125, cysteine 76–cysteine 150, cysteine 77–cysteine 118, cysteine 86–cysteine 111, and cysteine 104–cysteine 116. Tyrosine 54, glycine 56, and glycine 58 together coordinate Ca(2+). Histidine 74 is a catalytic residue. Aspartate 75 contacts Ca(2+). Aspartate 119 is an active-site residue.

This sequence belongs to the phospholipase A2 family. Interacts with PLA2R1; this interaction mediates PLA2G10 clearance and inactivation. The cofactor is Ca(2+).

The protein resides in the secreted. Its subcellular location is the lysosome. The protein localises to the cytoplasmic vesicle. It localises to the secretory vesicle. It is found in the acrosome. The catalysed reaction is a 1,2-diacyl-sn-glycero-3-phosphocholine + H2O = a 1-acyl-sn-glycero-3-phosphocholine + a fatty acid + H(+). The enzyme catalyses 1-hexadecanoyl-2-(9Z-octadecenoyl)-sn-glycero-3-phosphocholine + H2O = 1-hexadecanoyl-sn-glycero-3-phosphocholine + (9Z)-octadecenoate + H(+). It catalyses the reaction 1-octadecanoyl-2-(5Z,8Z,11Z,14Z-eicosatetraenoyl)-sn-glycero-3-phosphocholine + H2O = 1-octadecanoyl-sn-glycero-3-phosphocholine + (5Z,8Z,11Z,14Z)-eicosatetraenoate + H(+). It carries out the reaction 1,2-dihexadecanoyl-sn-glycero-3-phosphocholine + H2O = 1-hexadecanoyl-sn-glycero-3-phosphocholine + hexadecanoate + H(+). The catalysed reaction is 1-hexadecanoyl-2-(9Z-octadecenoyl)-sn-glycero-3-phosphoglycerol + H2O = 1-hexadecanoyl-sn-glycero-3-phosphoglycerol + (9Z)-octadecenoate + H(+). The enzyme catalyses 1,2-dihexadecanoyl-sn-glycero-3-phospho-(1'-sn-glycerol) + H2O = 1-hexadecanoyl-sn-glycero-3-phospho-(1'-sn-glycerol) + hexadecanoate + H(+). It catalyses the reaction 1-hexadecanoyl-2-(9Z-octadecenoyl)-sn-glycero-3-phospho-L-serine + H2O = 1-hexadecanoyl-sn-glycero-3-phospho-L-serine + (9Z)-octadecenoate + H(+). It carries out the reaction 1-hexadecanoyl-2-(9Z,12Z-octadecadienoyl)-sn-glycero-3-phosphoethanolamine + H2O = 1-hexadecanoyl-sn-glycero-3-phosphoethanolamine + (9Z,12Z)-octadecadienoate + H(+). The catalysed reaction is 1-hexadecanoyl-2-(9Z-octadecenoyl)-sn-glycero-3-phosphate + H2O = 1-hexadecanoyl-sn-glycero-3-phosphate + (9Z)-octadecenoate + H(+). The enzyme catalyses 1-O-hexadecyl-2-acetyl-sn-glycero-3-phosphocholine + H2O = 1-O-hexadecyl-sn-glycero-3-phosphocholine + acetate + H(+). Secretory calcium-dependent phospholipase A2 that primarily targets extracellular phospholipids. Hydrolyzes the ester bond of the fatty acyl group attached at sn-2 position of phospholipids with preference for phosphatidylcholines and phosphatidylglycerols over phosphatidylethanolamines. Preferentially releases sn-2 omega-6 and omega-3 polyunsaturated fatty acyl (PUFA) chains over saturated fatty acyls. Contributes to phospholipid remodeling of very low-density lipoprotein (VLDL), low-density lipoprotein (LDL) and high-density lipoprotein (HDL) particles. Hydrolyzes LDL phospholipids releasing unsaturated fatty acids that regulate macrophage differentiation toward foam cells. Efficiently hydrolyzes and inactivates platelet activating factor (PAF), a potent lipid mediator present in oxidized LDL. May act in an autocrine and paracrine manner. Secreted by lung epithelium, targets membrane phospholipids of infiltrating eosinophils, releasing arachidonate and boosting eicosanoid and cysteinyl leukotriene synthesis involved in airway inflammatory response. Secreted by gut epithelium, hydrolyzes dietary and biliary phosphatidylcholines in the gastrointestinal lumen. Plays a stem cell regulator role in colon epithelium. Within intracellular compartment, mediates Paneth-like cell differentiation and its stem cell supporting functions by inhibiting the Wnt signaling pathway in intestinal stem cell (ISC). Secreted in the intestinal lumen upon inflammation, acts in an autocrine way and promotes prostaglandin E2 synthesis that stimulates Wnt signaling pathway in ISCs and tissue regeneration. May participate in hair follicle morphogenesis by regulating phosphatidylethanolamines metabolism at the outermost epithelial layer and facilitating melanin synthesis. By releasing lysophosphatidylcholines (LPCs) at sperm acrosome, controls sperm cell capacitation, acrosome reaction and overall fertility. May promote neurite outgrowth in neuron fibers involved in nociception. Contributes to lipid remodeling of cellular membranes and generation of lipid mediators involved in pathogen clearance. Cleaves sn-2 fatty acyl chains of phosphatidylglycerols and phosphatidylethanolamines, which are major components of membrane phospholipids in bacteria. Displays bactericidal activity against Gram-positive bacteria by directly hydrolyzing phospholipids of the bacterial membrane. In pulmonary epithelium, may contribute to host defense response against adenoviral infection. Prevents adenovirus entry into host cells by hydrolyzing host cell plasma membrane, releasing C16:0 LPCs that inhibit virus-mediated membrane fusion and viral infection. Likely prevents adenoviral entry into the endosomes of host cells. May play a role in maturation and activation of innate immune cells including macrophages, group 2 innate lymphoid cells and mast cells. The sequence is that of Group 10 secretory phospholipase A2 (Pla2g10) from Rattus norvegicus (Rat).